The sequence spans 510 residues: Ferredoxin--nitrite reductase (510 aa).

The [4Fe-4S] cluster site is built by cysteine 396, cysteine 402, cysteine 437, and cysteine 441. Residue cysteine 441 coordinates siroheme.

Belongs to the nitrite and sulfite reductase 4Fe-4S domain family.

The enzyme catalyses 6 oxidized [2Fe-2S]-[ferredoxin] + NH4(+) + 2 H2O = nitrite + 6 reduced [2Fe-2S]-[ferredoxin] + 8 H(+). The sequence is that of Ferredoxin--nitrite reductase (nirA) from Leptolyngbya laminosa (Phormidium laminosum).